The sequence spans 221 residues: Small ribosomal subunit protein uS3c (221 aa).

In terms of domain architecture, KH type-2 spans 39–109 (LRDYLKTRLA…RVIVHVVEIA (71 aa)).

It belongs to the universal ribosomal protein uS3 family. Part of the 30S ribosomal subunit.

It localises to the plastid. Its subcellular location is the chloroplast. This Nephroselmis olivacea (Green alga) protein is Small ribosomal subunit protein uS3c (rps3).